The chain runs to 468 residues: Neuronal acetylcholine receptor subunit alpha-5 (468 aa).

The N-terminal stretch at 1 to 22 (MAARGSGPRALRLLLLVQLVAG) is a signal peptide. Topologically, residues 23 to 254 (RCGLAGAAGG…VIKRLPLFYT (232 aa)) are extracellular. N-linked (GlcNAc...) asparagine glycosylation is found at asparagine 155, asparagine 183, and asparagine 229. Cysteine 170 and cysteine 184 are disulfide-bonded. Cysteine 234 and cysteine 235 are disulfide-bonded. 3 consecutive transmembrane segments (helical) span residues 255-275 (LFLIIPCIGLSFLTVLVFYLP), 282-302 (ICLCTSVLVSLTVFLLVIEEI), and 317-337 (LVFTMIFVTLSIMVTVFAINI). Residues 338–429 (HHRSSSTHNA…WKFIAQVLDR (92 aa)) are Cytoplasmic-facing. The chain crosses the membrane as a helical span at residues 430–451 (MFLWTFLFVSIVGSLGLFVPVI). The Extracellular segment spans residues 452-468 (YKWANILIPVHIGNANK).

It belongs to the ligand-gated ion channel (TC 1.A.9) family. Acetylcholine receptor (TC 1.A.9.1) subfamily. Alpha-5/CHRNA5 sub-subfamily. Neuronal AChR that forms heteropentamers composed of two different type of subunits: alpha and non-alpha (beta). CHRNA5/alpha-5 subunit is only able to form functional nAChRs when co-assembled with another alpha subunit, can be combined to CHRNA4/alpha-4 or CHRNA3/alpha-3 and CHRNB4/beta-4 or CHRNB2/beta-2 to give rise to functional receptors. Interacts with LYPD6.

It is found in the synaptic cell membrane. The protein localises to the cell membrane. The enzyme catalyses Ca(2+)(in) = Ca(2+)(out). The catalysed reaction is K(+)(in) = K(+)(out). It carries out the reaction Na(+)(in) = Na(+)(out). Activated by a myriad of ligands such as acetylcholine, cytisine, nicotine, choline and epibatidine. In terms of biological role, component of neuronal acetylcholine receptors (nAChRs) that function as pentameric, ligand-gated cation channels with high calcium permeability among other activities. nAChRs are excitatory neurotrasnmitter receptors formed by a collection of nAChR subunits known to mediate synaptic transmission in the nervous system and the neuromuscular junction. Each nAchR subunit confers differential attributes to channel properties, including activation, deactivation and desensitization kinetics, pH sensitivity, cation permeability, and binding to allosteric modulators. Has an accessory rather than functional role and is only able to form functional nAChRs when co-assembled with another beta subunit. Participates in pentameric assemblies along with CHRNA3, CHRNA4, CHRNB2 and CHRNB4. Increases receptor sensitivity to acetylcholine and nicotine when associated with CHRNA4 and CHRNB2. Plays a role in nicotine addiction. The chain is Neuronal acetylcholine receptor subunit alpha-5 from Homo sapiens (Human).